The primary structure comprises 262 residues: Taurine import ATP-binding protein TauB (262 aa).

The ABC transporter domain occupies 4-234 (VDHASVFFAA…RFAETGDARS (231 aa)). 39-46 (GASGCGKS) contributes to the ATP binding site.

This sequence belongs to the ABC transporter superfamily. Taurine importer (TC 3.A.1.17.1) family. The complex is composed of two ATP-binding proteins (TauB), two transmembrane proteins (TauC) and a solute-binding protein (TauA).

The protein localises to the cell inner membrane. The enzyme catalyses taurine(out) + ATP + H2O = taurine(in) + ADP + phosphate + H(+). Part of the ABC transporter complex TauABC involved in taurine import. Responsible for energy coupling to the transport system. The chain is Taurine import ATP-binding protein TauB from Rhizobium johnstonii (strain DSM 114642 / LMG 32736 / 3841) (Rhizobium leguminosarum bv. viciae).